Here is a 309-residue protein sequence, read N- to C-terminus: ADP-L-glycero-D-manno-heptose-6-epimerase (309 aa).

NADP(+)-binding positions include 10–11, 31–32, Lys-38, Lys-53, 75–79, and Asn-92; these read FI, DN, and LGACS. The active-site Proton acceptor is the Tyr-140. Lys-144 serves as a coordination point for NADP(+). Residue Asn-169 participates in substrate binding. Positions 170 and 178 each coordinate NADP(+). The Proton acceptor role is filled by Lys-178. Substrate contacts are provided by residues Ser-180, His-187, 201-204, Arg-209, and Tyr-272; that span reads FLGS.

This sequence belongs to the NAD(P)-dependent epimerase/dehydratase family. HldD subfamily. In terms of assembly, homopentamer. NADP(+) is required as a cofactor.

The enzyme catalyses ADP-D-glycero-beta-D-manno-heptose = ADP-L-glycero-beta-D-manno-heptose. It participates in nucleotide-sugar biosynthesis; ADP-L-glycero-beta-D-manno-heptose biosynthesis; ADP-L-glycero-beta-D-manno-heptose from D-glycero-beta-D-manno-heptose 7-phosphate: step 4/4. Catalyzes the interconversion between ADP-D-glycero-beta-D-manno-heptose and ADP-L-glycero-beta-D-manno-heptose via an epimerization at carbon 6 of the heptose. In Hamiltonella defensa subsp. Acyrthosiphon pisum (strain 5AT), this protein is ADP-L-glycero-D-manno-heptose-6-epimerase.